The chain runs to 1052 residues: Membrane-bound transcription factor site-1 protease (1052 aa).

Positions 1-17 (MKLINIWLLLLVVLLCG) are cleaved as a signal peptide. The propeptide occupies 18–186 (KKHLGDRLGK…TGRHSSRRLL (169 aa)). N-linked (GlcNAc...) asparagine glycosylation occurs at Asn-148. The residue at position 168 (Ser-168) is a Phosphoserine. Over 187–999 (RAIPRQVAQT…MPGRYNQEVG (813 aa)) the chain is Lumenal. The Peptidase S8 domain maps to 190–472 (PRQVAQTLQA…HGKLDLLRAY (283 aa)). Asp-218 serves as the catalytic Charge relay system. Asn-236 carries N-linked (GlcNAc...) asparagine glycosylation. His-249 acts as the Charge relay system in catalysis. A glycan (N-linked (GlcNAc...) asparagine) is linked at Asn-305. The Charge relay system role is filled by Ser-414. Residues Asn-515 and Asn-728 are each glycosylated (N-linked (GlcNAc...) asparagine). Polar residues predominate over residues 877 to 887 (PSLSHSGNRQR). Residues 877 to 900 (PSLSHSGNRQRPPSGAGLAPPERM) form a disordered region. Asn-939 carries N-linked (GlcNAc...) asparagine glycosylation. A helical transmembrane segment spans residues 1000-1022 (QTIPVFAFLGAMVALAFFVVQIS). Residues 1023–1052 (KAKSRPKRRRPRAKRPQLTQQTHPPRTPSV) are Cytoplasmic-facing. The segment covering 1025 to 1037 (KSRPKRRRPRAKR) has biased composition (basic residues). The segment at 1025–1052 (KSRPKRRRPRAKRPQLTQQTHPPRTPSV) is disordered.

Belongs to the peptidase S8 family. Requires Ca(2+) as cofactor. Post-translationally, the 148 kDa zymogen is processed progressively into two membrane-bound 120 and 106 kDa forms in the endoplasmic reticulum, and late into a secreted 98 kDa form. The propeptide is autocatalytically removed through an intramolecular cleavage after Leu-186. Further cleavage generates 14, 10, and 8 kDa intermediates.

Its subcellular location is the endoplasmic reticulum membrane. The protein resides in the golgi apparatus membrane. The enzyme catalyses Processes precursors containing basic and hydrophobic/aliphatic residues at P4 and P2, respectively, with a relatively relaxed acceptance of amino acids at P1 and P3.. Inhibited by divalent copper and zinc ions, but not by nickel or cobalt. Inhibited by its prosegment, but not smaller fragments. Inhibited by 4-(2-aminoethyl)benzenesulfonyl fluoride (AEBSF), a serine protease inhibitor. Serine protease that cleaves after hydrophobic or small residues, provided that Arg or Lys is in position P4: known substrates include SREBF1/SREBP1, SREBF2/SREBP2, BDNF, GNPTAB, ATF6, ATF6B and FAM20C. Cleaves substrates after Arg-Ser-Val-Leu (SREBP2), Arg-His-Leu-Leu (ATF6), Arg-Gly-Leu-Thr (BDNF) and its own propeptide after Arg-Arg-Leu-Leu. Catalyzes the first step in the proteolytic activation of the sterol regulatory element-binding proteins (SREBPs) SREBF1/SREBP1 and SREBF2/SREBP2. Also mediates the first step in the proteolytic activation of the cyclic AMP-dependent transcription factor ATF-6 (ATF6 and ATF6B). Mediates the protein cleavage of GNPTAB into subunit alpha and beta, thereby participating in biogenesis of lysosomes. Cleaves the propeptide from FAM20C which is required for FAM20C secretion from the Golgi apparatus membrane and for enhancement of FAM20C kinase activity, promoting osteoblast differentiation and biomineralization. Involved in the regulation of M6P-dependent Golgi-to-lysosome trafficking of lysosomal enzymes. It is required for the activation of CREB3L2/BBF2H7, a transcriptional activator of MIA3/TANGO and other genes controlling mega vesicle formation. Therefore, it plays a key role in the regulation of mega vesicle-mediated collagen trafficking. In astrocytes and osteoblasts, upon DNA damage and ER stress, mediates the first step of the regulated intramembrane proteolytic activation of the transcription factor CREB3L1, leading to the inhibition of cell-cycle progression. The chain is Membrane-bound transcription factor site-1 protease from Cricetulus griseus (Chinese hamster).